A 240-amino-acid polypeptide reads, in one-letter code: Probable transcriptional regulatory protein MADE_1004275 (240 aa).

Belongs to the TACO1 family.

It localises to the cytoplasm. This chain is Probable transcriptional regulatory protein MADE_1004275, found in Alteromonas mediterranea (strain DSM 17117 / CIP 110805 / LMG 28347 / Deep ecotype).